We begin with the raw amino-acid sequence, 528 residues long: Probable cyclic di-GMP phosphodiesterase PdeC (528 aa).

Helical transmembrane passes span 14–34 (GIIF…FLWA) and 242–262 (HLIF…LLWL). In terms of domain architecture, EAL spans 268-520 (YLSPKRKLQR…VFMQWMEQLP (253 aa)).

The protein resides in the cell inner membrane. It carries out the reaction 3',3'-c-di-GMP + H2O = 5'-phosphoguanylyl(3'-&gt;5')guanosine + H(+). Functionally, phosphodiesterase (PDE) that catalyzes the hydrolysis of cyclic-di-GMP (c-di-GMP) to 5'-pGpG. Cyclic-di-GMP is a second messenger which controls cell surface-associated traits in bacteria. Overexpression reduces biofilm formation. This Escherichia coli (strain K12) protein is Probable cyclic di-GMP phosphodiesterase PdeC.